Consider the following 442-residue polypeptide: Cytochrome c biogenesis CcmF C-terminal-like mitochondrial protein (442 aa).

3 helical membrane-spanning segments follow: residues 6-26, 39-59, and 122-142; these read NFFF…PVLL, PFFN…LVYL, and YLES…FFLA. Residues 151 to 175 are disordered; that stretch reads RARRRKGQTLRPNGNEQRRNDKMRC. The span at 166–175 shows a compositional bias: basic and acidic residues; it reads EQRRNDKMRC. Residues 411–431 form a helical membrane-spanning segment; it reads FIFFIWIGFMLASLGGLPSLL.

This sequence belongs to the CcmF/CycK/Ccl1/NrfE/CcsA family. As to quaternary structure, interacts with CCMFN2.

The protein resides in the mitochondrion inner membrane. Functionally, forms a complex with CCMFN1, CCMFN2 and CCMH that performs the assembly of heme with c-type apocytochromes in mitochondria. This is Cytochrome c biogenesis CcmF C-terminal-like mitochondrial protein (CCMFC) from Arabidopsis thaliana (Mouse-ear cress).